Here is a 406-residue protein sequence, read N- to C-terminus: Succinylornithine transaminase (406 aa).

Lysine 252 carries the post-translational modification N6-(pyridoxal phosphate)lysine.

Belongs to the class-III pyridoxal-phosphate-dependent aminotransferase family. AstC subfamily. It depends on pyridoxal 5'-phosphate as a cofactor.

The enzyme catalyses N(2)-succinyl-L-ornithine + 2-oxoglutarate = N-succinyl-L-glutamate 5-semialdehyde + L-glutamate. It functions in the pathway amino-acid degradation; L-arginine degradation via AST pathway; L-glutamate and succinate from L-arginine: step 3/5. Catalyzes the transamination of N(2)-succinylornithine and alpha-ketoglutarate into N(2)-succinylglutamate semialdehyde and glutamate. Can also act as an acetylornithine aminotransferase. This chain is Succinylornithine transaminase, found in Escherichia coli O127:H6 (strain E2348/69 / EPEC).